The chain runs to 90 residues: Probable oxaloacetate decarboxylase gamma chain 2 (90 aa).

The helical transmembrane segment at 10-32 threads the bilayer; that stretch reads GINLLTLGMGFVFIFLIFLVYAT.

Belongs to the OadG family. As to quaternary structure, heterotrimer of an alpha, a beta and a gamma subunit. Na(+) is required as a cofactor.

The protein resides in the cell membrane. The catalysed reaction is oxaloacetate + 2 Na(+)(in) + H(+) = pyruvate + 2 Na(+)(out) + CO2. In terms of biological role, catalyzes the decarboxylation of oxaloacetate coupled to Na(+) translocation. In Vibrio cholerae serotype O1 (strain ATCC 39315 / El Tor Inaba N16961), this protein is Probable oxaloacetate decarboxylase gamma chain 2 (oadG2).